We begin with the raw amino-acid sequence, 243 residues long: Anti-H(O) lectin 1 (243 aa).

The N-linked (GlcNAc...) asparagine; partial glycan is linked to N10. A glycan (N-linked (GlcNAc...) asparagine) is linked at N116. Positions 126 and 128 each coordinate Mn(2+). Positions 128, 135, and 138 each coordinate Ca(2+). Mn(2+) is bound by residues D138 and H143.

It belongs to the leguminous lectin family.

L-fucose specific lectin. The polypeptide is Anti-H(O) lectin 1 (Ulex europaeus (Furze)).